A 256-amino-acid chain; its full sequence is Phosphonates import ATP-binding protein PhnC (256 aa).

In terms of domain architecture, ABC transporter spans 3 to 247 (LELKNISKTY…VLHKEIFTNV (245 aa)). 36 to 43 (GLSGAGKS) contributes to the ATP binding site.

Belongs to the ABC transporter superfamily. Phosphonates importer (TC 3.A.1.9.1) family. As to quaternary structure, the complex is composed of two ATP-binding proteins (PhnC), two transmembrane proteins (PhnE) and a solute-binding protein (PhnD).

Its subcellular location is the cell inner membrane. It carries out the reaction phosphonate(out) + ATP + H2O = phosphonate(in) + ADP + phosphate + H(+). Part of the ABC transporter complex PhnCDE involved in phosphonates import. Responsible for energy coupling to the transport system. The protein is Phosphonates import ATP-binding protein PhnC of Treponema denticola (strain ATCC 35405 / DSM 14222 / CIP 103919 / JCM 8153 / KCTC 15104).